Consider the following 327-residue polypeptide: MREVMLSECMNLLYESNFVISKPFGRSCFDLIAKKADLKLLIKILKNIDSLSTEQSEELLNIARILQAVPLIIGSRTRNSVMEEGAVYERFGIKAVTFLTFQEQVRGIPPVVYANRGGFFVNIDGKALKETREKLNISVGELAEFSRVSRKTIYKYEQNEANPSAEVAIKIEEYLDVPLIKGINITDYFEGVNLPKSREEAFEKILKEGEDFKVKVIEILGDMGFNLLETTKAPFDAVAEESKNKGDEVHNVLFTNIQETENEEIRKKAIIVDEISKIFNSHSLLILETRKNEDKKIMSMSIRELEKMGDTVDLIDFIEKRKKSKDI.

In terms of domain architecture, HTH cro/C1-type spans 128–189 (LKETREKLNI…IKGINITDYF (62 aa)). Residues 139-158 (VGELAEFSRVSRKTIYKYEQ) constitute a DNA-binding region (H-T-H motif).

The chain is Putative HTH-type transcriptional regulatory protein Mevan_1514 from Methanococcus vannielii (strain ATCC 35089 / DSM 1224 / JCM 13029 / OCM 148 / SB).